Reading from the N-terminus, the 300-residue chain is UDP-N-acetylenolpyruvoylglucosamine reductase (300 aa).

The FAD-binding PCMH-type domain maps to 30 to 194; it reads KVGGPADFFA…LAAVFSLAAG (165 aa). Arg-174 is a catalytic residue. Ser-223 serves as the catalytic Proton donor. Glu-293 is an active-site residue.

The protein belongs to the MurB family. It depends on FAD as a cofactor.

The protein resides in the cytoplasm. The catalysed reaction is UDP-N-acetyl-alpha-D-muramate + NADP(+) = UDP-N-acetyl-3-O-(1-carboxyvinyl)-alpha-D-glucosamine + NADPH + H(+). Its pathway is cell wall biogenesis; peptidoglycan biosynthesis. In terms of biological role, cell wall formation. In Geotalea uraniireducens (strain Rf4) (Geobacter uraniireducens), this protein is UDP-N-acetylenolpyruvoylglucosamine reductase.